The sequence spans 930 residues: Isoleucine--tRNA ligase (930 aa).

Positions 57–67 match the 'HIGH' region motif; it reads PYANGNIHVGH. L-isoleucyl-5'-AMP is bound at residue E554. The 'KMSKS' region motif lies at 595 to 599; sequence KMSKS. K598 provides a ligand contact to ATP.

Belongs to the class-I aminoacyl-tRNA synthetase family. IleS type 1 subfamily. As to quaternary structure, monomer.

Its subcellular location is the cytoplasm. It catalyses the reaction tRNA(Ile) + L-isoleucine + ATP = L-isoleucyl-tRNA(Ile) + AMP + diphosphate. Its function is as follows. Catalyzes the attachment of isoleucine to tRNA(Ile). As IleRS can inadvertently accommodate and process structurally similar amino acids such as valine, to avoid such errors it has two additional distinct tRNA(Ile)-dependent editing activities. One activity is designated as 'pretransfer' editing and involves the hydrolysis of activated Val-AMP. The other activity is designated 'posttransfer' editing and involves deacylation of mischarged Val-tRNA(Ile). The sequence is that of Isoleucine--tRNA ligase from Streptococcus agalactiae serotype III (strain NEM316).